The primary structure comprises 277 residues: Alternative cytochrome c oxidase subunit 2 (277 aa).

At 1 to 40 (MAVALILLLIAIGSVLFHLFSPWWWTPIATNWGYIDDTIN) the chain is on the periplasmic side. A helical transmembrane segment spans residues 41–61 (ITFWITGFVFTAVILFMAYCV). At 62–83 (FRFHHKEGRQAAYNPENKKLEW) the chain is on the cytoplasmic side. Residues 84-104 (WLSVGTGVGVAAMLAPGLVVW) form a helical membrane-spanning segment. The Periplasmic portion of the chain corresponds to 105 to 277 (HQFVTVPADA…VRAKYNSGDD (173 aa)). Positions 190, 225, 229, and 233 each coordinate Cu cation.

This sequence belongs to the cytochrome c oxidase subunit 2 family.

The protein localises to the cell membrane. It carries out the reaction 4 Fe(II)-[cytochrome c] + O2 + 8 H(+)(in) = 4 Fe(III)-[cytochrome c] + 2 H2O + 4 H(+)(out). Its function is as follows. Cytochrome c oxidase is the component of the respiratory chain that catalyzes the reduction of oxygen to water. Subunits 1-3 form the functional core of the enzyme complex. Subunit 2 transfers the electrons from cytochrome c via its binuclear copper A center to the bimetallic center of the catalytic subunit 1. This chain is Alternative cytochrome c oxidase subunit 2 (coxM), found in Bradyrhizobium diazoefficiens (strain JCM 10833 / BCRC 13528 / IAM 13628 / NBRC 14792 / USDA 110).